Reading from the N-terminus, the 146-residue chain is Ribonuclease H (146 aa).

The RNase H type-1 domain maps to 1 to 143; the sequence is MKKQVTIYTD…CDQLAREAIK (143 aa). The Mg(2+) site is built by Asp10, Glu48, Asp70, and Asp135.

The protein belongs to the RNase H family. In terms of assembly, monomer. The cofactor is Mg(2+).

It localises to the cytoplasm. The catalysed reaction is Endonucleolytic cleavage to 5'-phosphomonoester.. Endonuclease that specifically degrades the RNA of RNA-DNA hybrids. This is Ribonuclease H from Chlorobium chlorochromatii (strain CaD3).